Consider the following 153-residue polypeptide: SsrA-binding protein (153 aa).

The interval 131–153 (EYDKRDSIRERDDRREMDRAFKR) is disordered.

This sequence belongs to the SmpB family.

The protein localises to the cytoplasm. Functionally, required for rescue of stalled ribosomes mediated by trans-translation. Binds to transfer-messenger RNA (tmRNA), required for stable association of tmRNA with ribosomes. tmRNA and SmpB together mimic tRNA shape, replacing the anticodon stem-loop with SmpB. tmRNA is encoded by the ssrA gene; the 2 termini fold to resemble tRNA(Ala) and it encodes a 'tag peptide', a short internal open reading frame. During trans-translation Ala-aminoacylated tmRNA acts like a tRNA, entering the A-site of stalled ribosomes, displacing the stalled mRNA. The ribosome then switches to translate the ORF on the tmRNA; the nascent peptide is terminated with the 'tag peptide' encoded by the tmRNA and targeted for degradation. The ribosome is freed to recommence translation, which seems to be the essential function of trans-translation. In Parabacteroides distasonis (strain ATCC 8503 / DSM 20701 / CIP 104284 / JCM 5825 / NCTC 11152), this protein is SsrA-binding protein.